The following is a 352-amino-acid chain: MSEKTEQPTEKKLRDGRKEGQVVKSIEITSLFQLIALYLYFHFFTEKMILILIESITFTLQLVNKPFSYALTQLSHALIESLTSALLFLGAGVIVATVGSVFLQVGVVIASKAIGFKSEHINPVSNFKQIFSLHSVVELCKSSLKVIMLSLIFAFFFYYYASTFRALPYCGLACGVLVVSSLIKWLWVGVMVFYIVVGILDYSFQYYKIRKDLKMSKDDVKQEHKDLEGDPQMKTRRREMQSEIQSGSLAQSVKQSVAVVRNPTHIAVCLGYHPTDMPIPRVLEKGSDAQANYIVNIAERNCIPVVENVELARSLFFEVERGDKIPETLFEPVAALLRMVMKIDYAHSTETP.

4 consecutive transmembrane segments (helical) span residues 34-54 (LIAL…ILIE), 89-109 (LGAG…GVVI), 144-164 (LKVI…ASTF), and 176-196 (VLVV…FYIV).

Belongs to the type III secretion exporter family.

Its subcellular location is the cell membrane. Functionally, part of a type III secretion system. The chain is Secretion system apparatus protein SsaU (ssaU) from Salmonella typhimurium (strain LT2 / SGSC1412 / ATCC 700720).